We begin with the raw amino-acid sequence, 1433 residues long: Pleckstrin homology domain-containing family H member 1 (1433 aa).

Residues 40–174 are a coiled coil; that stretch reads NIRHLLAERM…QILMLQDKLQ (135 aa). 2 disordered regions span residues 247-346 and 552-634; these read DKAD…LSPP and SSVP…TSSY. Over residues 252–266 the composition is skewed to polar residues; sequence PKSSQDGVDATSTVK. Basic and acidic residues predominate over residues 279–299; sequence MRDRAMGGASDRDHSSDELNS. Residues 308–318 are compositionally biased toward low complexity; that stretch reads SSSSSSSSSSS. Positions 332 to 343 are enriched in pro residues; sequence TPTPKSPPPVSL. The segment covering 557–567 has biased composition (acidic residues); that stretch reads PDDDSGSEDDS. The span at 568 to 578 shows a compositional bias: low complexity; the sequence is SSLASLHTSTL. The span at 597–606 shows a compositional bias: polar residues; sequence VSTSSISSES. PH domains lie at 643-737 and 751-859; these read TLEK…NVLK and KPTA…VAAG. The MyTH4 domain occupies 896–1050; that stretch reads FSKEGLRYPL…PSRMEILSIL (155 aa). Residues 1061–1392 form the FERM domain; it reads FSIPVHFMNN…SYINYWTSSL (332 aa).

Critical component of the guidance pathway underlying endothelial cell migration and blood vessel patterning. Involved in mediating membrane localization of ephrin proteins, which have been shown to provide guidance cues for endothelial cell migration. This is Pleckstrin homology domain-containing family H member 1 (plekhh1) from Danio rerio (Zebrafish).